A 52-amino-acid polypeptide reads, in one-letter code: uncharacterized protein (52 aa).

This is an uncharacterized protein from Halalkalibacterium halodurans (strain ATCC BAA-125 / DSM 18197 / FERM 7344 / JCM 9153 / C-125) (Bacillus halodurans).